Here is a 146-residue protein sequence, read N- to C-terminus: 3-dehydroquinate dehydratase (146 aa).

The Proton acceptor role is filled by Y23. Substrate contacts are provided by N75, H81, and D88. H101 functions as the Proton donor in the catalytic mechanism. Residues 102–103 and R112 each bind substrate; that span reads LS.

The protein belongs to the type-II 3-dehydroquinase family. Homododecamer.

It carries out the reaction 3-dehydroquinate = 3-dehydroshikimate + H2O. The protein operates within metabolic intermediate biosynthesis; chorismate biosynthesis; chorismate from D-erythrose 4-phosphate and phosphoenolpyruvate: step 3/7. Catalyzes a trans-dehydration via an enolate intermediate. In Marinobacter nauticus (strain ATCC 700491 / DSM 11845 / VT8) (Marinobacter aquaeolei), this protein is 3-dehydroquinate dehydratase.